The primary structure comprises 242 residues: 3-dehydroquinate dehydratase (242 aa).

Residues 39-41 and R73 contribute to the 3-dehydroquinate site; that span reads EVR. H135 serves as the catalytic Proton donor/acceptor. K162 serves as the catalytic Schiff-base intermediate with substrate. 3-dehydroquinate contacts are provided by R203 and Q228.

The protein belongs to the type-I 3-dehydroquinase family. Homodimer.

The catalysed reaction is 3-dehydroquinate = 3-dehydroshikimate + H2O. Its pathway is metabolic intermediate biosynthesis; chorismate biosynthesis; chorismate from D-erythrose 4-phosphate and phosphoenolpyruvate: step 3/7. In terms of biological role, involved in the third step of the chorismate pathway, which leads to the biosynthesis of aromatic amino acids. Catalyzes the cis-dehydration of 3-dehydroquinate (DHQ) and introduces the first double bond of the aromatic ring to yield 3-dehydroshikimate. The sequence is that of 3-dehydroquinate dehydratase from Methanosarcina acetivorans (strain ATCC 35395 / DSM 2834 / JCM 12185 / C2A).